The following is a 70-amino-acid chain: Large ribosomal subunit protein bL31 (70 aa).

Residues Cys-16, Cys-18, Cys-37, and Cys-40 each coordinate Zn(2+).

Belongs to the bacterial ribosomal protein bL31 family. Type A subfamily. As to quaternary structure, part of the 50S ribosomal subunit. Requires Zn(2+) as cofactor.

Functionally, binds the 23S rRNA. This Colwellia psychrerythraea (strain 34H / ATCC BAA-681) (Vibrio psychroerythus) protein is Large ribosomal subunit protein bL31.